Reading from the N-terminus, the 97-residue chain is Nucleoid-associated protein HPP12_0031 (97 aa).

Belongs to the YbaB/EbfC family. In terms of assembly, homodimer.

The protein localises to the cytoplasm. The protein resides in the nucleoid. Its function is as follows. Binds to DNA and alters its conformation. May be involved in regulation of gene expression, nucleoid organization and DNA protection. This is Nucleoid-associated protein HPP12_0031 from Helicobacter pylori (strain P12).